We begin with the raw amino-acid sequence, 273 residues long: Arginine and glutamate-rich protein 1 (273 aa).

Composition is skewed to basic residues over residues 1-29 (MGRSRSRSSSRSKHTKSSKHNKKRSRSRS) and 37-58 (VRKRSKSRESKRNRRRESRSRS). A necessary and sufficient for RNA binding region spans residues 1 to 74 (MGRSRSRSSS…VSRRERDRER (74 aa)). A disordered region spans residues 1–113 (MGRSRSRSSS…EEKKAEFERQ (113 aa)). 2 positions are modified to phosphoserine: Ser-58 and Ser-60. A Phosphothreonine modification is found at Thr-61. Composition is skewed to basic and acidic residues over residues 66 to 84 (SRRERDRERASSPPDRIDI) and 93 to 113 (SSLDEKQKREEEEKKAEFERQ). Positions 75 to 273 (ASSPPDRIDI…KLSFSLKTQD (199 aa)) are necessary and sufficient for transcriptional regulation. Residues Ser-76 and Ser-77 each carry the phosphoserine modification. The LXXLL motif 1; degenerate motif lies at 172–176 (LLEEL). The LXXLL motif 2; degenerate motif lies at 201–205 (LERIL). The segment covering 238-253 (MKLEQERQRQQKEEQK) has biased composition (basic and acidic residues). A disordered region spans residues 238-273 (MKLEQERQRQQKEEQKIILGKGKSRPKLSFSLKTQD). Phosphoserine is present on Ser-266.

It belongs to the ARGLU1 family. As to quaternary structure, interacts with MED1; the interaction is direct. Interacts with PUF60, U2AF2 and JMJD6; may interact with other proteins involved in RNA processing and splicing.

It is found in the nucleus. The protein resides in the nucleus speckle. It localises to the chromosome. In terms of biological role, dual function regulator of gene expression; regulator of transcription and modulator of alternative splicing. General coactivator of nuclear receptor-induced gene expression, including genes activated by the glucocorticoid receptor NR3C1. Binds to a subset of pre-mRNAs and to components of the spliceosome machinery to directly modulate basal alternative splicing; involved in simple and complex cassette exon splicing events. Binds its own pre-mRNA and regulates its alternative splicing and degradation; one of the alternatively spliced products is a stable intronic sequence RNA (sisRNA) that binds the protein to regulate its ability to affect splicing. Binding of the sisRNA stimulates phase separation and localization to nuclear speckles, which may contribute to activation of nuclear receptor-induced gene expression. May also indirectly modulate alternative splicing. Regulates transcription of genes involved in heart development, neuronal cell function, protein localization and chromatin localization. Regulates splicing of genes involved in neurogenesis and chromatin organization. Essential for central nervous system development. Required for the estrogen-dependent expression of ESR1 target genes. Can act in cooperation with MED1. The polypeptide is Arginine and glutamate-rich protein 1 (ARGLU1) (Bos taurus (Bovine)).